The chain runs to 238 residues: Probable transcriptional regulatory protein LACR_0237 (238 aa).

Belongs to the TACO1 family. YeeN subfamily.

It is found in the cytoplasm. This chain is Probable transcriptional regulatory protein LACR_0237, found in Lactococcus lactis subsp. cremoris (strain SK11).